Here is a 483-residue protein sequence, read N- to C-terminus: Putative inorganic phosphate cotransporter (483 aa).

Helical transmembrane passes span 64-84, 90-110, 187-207, 292-312, 349-369, 383-403, and 420-440; these read YILS…GILA, LRFL…VPVA, IFYV…IFVY, LPYL…DWMI, ALTL…YSGF, FLMS…PIAA, and IVFF…NIFG. The disordered stretch occupies residues 447-483; sequence WDNPSEDEQKPALESSSTTNPPRLSNGSSAPRAISSS. The segment covering 460 to 483 has biased composition (polar residues); sequence ESSSTTNPPRLSNGSSAPRAISSS.

This sequence belongs to the major facilitator superfamily. Sodium/anion cotransporter family.

It is found in the membrane. In terms of biological role, may be an inorganic phosphate cotransporter. This Drosophila ananassae (Fruit fly) protein is Putative inorganic phosphate cotransporter (Picot).